Here is a 492-residue protein sequence, read N- to C-terminus: N-succinylglutamate 5-semialdehyde dehydrogenase (492 aa).

220–225 is an NAD(+) binding site; sequence GSSTTG. Catalysis depends on residues Glu-243 and Cys-277.

The protein belongs to the aldehyde dehydrogenase family. AstD subfamily.

The catalysed reaction is N-succinyl-L-glutamate 5-semialdehyde + NAD(+) + H2O = N-succinyl-L-glutamate + NADH + 2 H(+). Its pathway is amino-acid degradation; L-arginine degradation via AST pathway; L-glutamate and succinate from L-arginine: step 4/5. Functionally, catalyzes the NAD-dependent reduction of succinylglutamate semialdehyde into succinylglutamate. This Klebsiella pneumoniae subsp. pneumoniae (strain ATCC 700721 / MGH 78578) protein is N-succinylglutamate 5-semialdehyde dehydrogenase.